Reading from the N-terminus, the 395-residue chain is MHGVTMKKISIFGATGSIGQSTIDLIRRAPDAYDVVALSGGHNVAQLARDAIELQADIAITAHDARLEELRSALAGSGVEAASGAAALVEAASRPADWIMSAIVGAAGLAPGLKALEQGTTLALANKESLVCAGALLMQTAADHGARILPVDSEHSAVFQALVGERIEEVERIIITASGGAFRDWPLERLKTASLAEASSHPNWDMGQRITIDSASMFNKALEVIETREFFGVAPEQIEVLVHPQSLVHALVGFRDGALMSHLGAPDMRHAIGYALHWPDRNALPVARLDLAAIGQLEFRAPDLQRYPALRLAQEVMRRGGLSGAAFNGAKERALDHFIAGRIGFLDMASLTEEGLATLEAQPGLIDASMTLENVTRVDDLARRAVDQVVTQRTG.

Positions 15, 16, 17, 18, 41, 43, and 126 each coordinate NADPH. Lys-127 contacts 1-deoxy-D-xylulose 5-phosphate. Glu-128 contributes to the NADPH binding site. A Mn(2+)-binding site is contributed by Asp-152. Residues Ser-153, Glu-154, Ser-178, and His-201 each contribute to the 1-deoxy-D-xylulose 5-phosphate site. Glu-154 provides a ligand contact to Mn(2+). Gly-207 contributes to the NADPH binding site. Positions 214, 219, 220, and 223 each coordinate 1-deoxy-D-xylulose 5-phosphate. A Mn(2+)-binding site is contributed by Glu-223.

Belongs to the DXR family. The cofactor is Mg(2+). Mn(2+) is required as a cofactor.

It carries out the reaction 2-C-methyl-D-erythritol 4-phosphate + NADP(+) = 1-deoxy-D-xylulose 5-phosphate + NADPH + H(+). It participates in isoprenoid biosynthesis; isopentenyl diphosphate biosynthesis via DXP pathway; isopentenyl diphosphate from 1-deoxy-D-xylulose 5-phosphate: step 1/6. Functionally, catalyzes the NADPH-dependent rearrangement and reduction of 1-deoxy-D-xylulose-5-phosphate (DXP) to 2-C-methyl-D-erythritol 4-phosphate (MEP). The polypeptide is 1-deoxy-D-xylulose 5-phosphate reductoisomerase (Ruegeria sp. (strain TM1040) (Silicibacter sp.)).